The primary structure comprises 117 residues: PBP1-interacting protein XAC1 (117 aa).

The interval 1-60 is disordered; sequence MSKAPSQPAKKWMSARTLAKSEDATNRKSNTAAPASQPSQQPASVMHERPTPPPPAPVQL. The segment covering 32-44 has biased composition (low complexity); it reads AAPASQPSQQPAS.

In terms of assembly, forms a complex composed of at least MKT1, PBP1, XAC1 and LSM12. Forms a complex composed of at least MKT1L, PBP1, XAC1 and LSM12.

It localises to the cytoplasm. In terms of biological role, involved in post-transcriptional regulation of gene expression. In Trypanosoma brucei brucei (strain 927/4 GUTat10.1), this protein is PBP1-interacting protein XAC1.